Reading from the N-terminus, the 884-residue chain is Formin-like protein 9 (884 aa).

The N-terminal stretch at 1-19 is a signal peptide; that stretch reads MGMAMRCVLVLFSVSPVLL. The helical transmembrane segment at 140 to 160 threads the bilayer; sequence IVALGVVGLCLVVLGVVIAAF. Disordered stretches follow at residues 179–204, 295–318, and 403–473; these read FHHGSRDQRSPAATRKVSSHPSPDPL, THDSPSDSSYQSLSPDCTSRLSPK, and TMTN…PLPR. The span at 300–310 shows a compositional bias: low complexity; the sequence is SDSSYQSLSPD. Over residues 429-443 the composition is skewed to pro residues; that stretch reads KPAPPPPPQKNPPPN. In terms of domain architecture, FH2 spans 464-884; the sequence is VGKDGSPLPR…QTLNLVLPLK (421 aa).

The protein belongs to the formin-like family. Class-I subfamily.

The protein resides in the membrane. The polypeptide is Formin-like protein 9 (FH9) (Oryza sativa subsp. indica (Rice)).